A 605-amino-acid polypeptide reads, in one-letter code: Protein DENND6A (605 aa).

A disordered region spans residues 1-20 (MALPGPAVFGPGSRGSLDEA). The uDENN domain maps to 60–239 (HCVCVVGFDL…KVRIPTCHDK (180 aa)). Position 124 is a phosphoserine (S124). The cDENN domain occupies 265-390 (EVDLFRCFCP…VKVKKLKNLK (126 aa)). The dDENN domain maps to 392–525 (LDSKPGVYTS…KTRRKEMTQK (134 aa)). K507 carries the post-translational modification N6-methyllysine.

It belongs to the DENND6 family.

Its subcellular location is the recycling endosome. It localises to the cytoplasm. Guanine nucleotide exchange factor (GEF) for RAB14. Component of an endocytic recycling pathway that is required for the control of ADAM10 transport, shedding of N-cadherin/CDH2 by ADAM9 or ADAM10 and regulation of cell-cell junctions. Required for RAB14 recruitment to recycling endosomes. The sequence is that of Protein DENND6A (Dennd6a) from Mus musculus (Mouse).